Here is a 71-residue protein sequence, read N- to C-terminus: MRGIILALLLALAGCEKSQYEPFFSESKTYVYNYEGIILNGIPENGLARSGIKLNCKVELSGYAQRSYMLK.

Residues 1 to 15 form the signal peptide; that stretch reads MRGIILALLLALAGC. The Vitellogenin domain maps to 24–71; sequence FSESKTYVYNYEGIILNGIPENGLARSGIKLNCKVELSGYAQRSYMLK.

Produced by the liver, secreted into the blood and then sequestered by receptor mediated endocytosis into growing oocytes, where it is generally cleaved, giving rise to the respective yolk components.

Functionally, precursor of the major egg-yolk proteins that are sources of nutrients during early development of oviparous organisms. The protein is Vitellogenin-B2 of Xenopus laevis (African clawed frog).